The chain runs to 701 residues: Coiled-coil domain-containing protein 62 (701 aa).

Coiled-coil stretches lie at residues 61-197 (ETST…LQAR) and 241-342 (TCVV…QFLN). The segment at 624–652 (KSAEREEESAALPDRRTSANEKDDFSPTS) is disordered. Basic and acidic residues predominate over residues 636 to 648 (PDRRTSANEKDDF). 2 consecutive short sequence motifs (LXXLL motif) follow at residues 654–658 (LQRLL) and 670–674 (LSTLL).

In terms of assembly, interacts with ESR1 and ESR2 in the presence of estradiol/E2. The interaction with ESR2 recruits CCDC62 to ER target genes, including cyclin-D1/CCND1 AP-1 promoter. Interacts with GOPC. As to expression, highly expressed in testis, not detected in other tissues (at protein level). Expressed at low levels in the epididymis, lung, spleen, bladder, kidney, liver, muscle.

The protein localises to the cytoplasm. It localises to the nucleus. It is found in the cytoplasmic vesicle. The protein resides in the secretory vesicle. Its subcellular location is the acrosome. In terms of biological role, nuclear receptor coactivator that can enhance preferentially estrogen receptors ESR1 and ESR2 transactivation. Also modulates progesterone/PGR, glucocorticoid/NR3C1 and androgen/AR receptors transactivation, although at lower level; little effect on vitamin D receptor/VDR. Required for normal spermiogenesis. It probably plays a role in acrosome formation. The sequence is that of Coiled-coil domain-containing protein 62 (Ccdc62) from Mus musculus (Mouse).